The sequence spans 72 residues: Translational regulator CsrA (72 aa).

The protein belongs to the CsrA/RsmA family. In terms of assembly, homodimer; the beta-strands of each monomer intercalate to form a hydrophobic core, while the alpha-helices form wings that extend away from the core.

The protein localises to the cytoplasm. A translational regulator that binds mRNA to regulate translation initiation and/or mRNA stability. Usually binds in the 5'-UTR at or near the Shine-Dalgarno sequence preventing ribosome-binding, thus repressing translation. Its main target seems to be the major flagellin gene, while its function is anatagonized by FliW. This Lachnoclostridium phytofermentans (strain ATCC 700394 / DSM 18823 / ISDg) (Clostridium phytofermentans) protein is Translational regulator CsrA.